A 348-amino-acid polypeptide reads, in one-letter code: Dihydroorotase (348 aa).

Zn(2+) contacts are provided by His14 and His16. Substrate-binding positions include 16 to 18 and Asn42; that span reads HLR. The Zn(2+) site is built by Lys100, His137, and His175. N6-carboxylysine is present on Lys100. Substrate is bound at residue His137. Leu220 is a substrate binding site. Asp248 is a Zn(2+) binding site. Asp248 is a catalytic residue. Substrate-binding residues include His252 and Ala264.

It belongs to the metallo-dependent hydrolases superfamily. DHOase family. Class II DHOase subfamily. Homodimer. Zn(2+) is required as a cofactor.

The catalysed reaction is (S)-dihydroorotate + H2O = N-carbamoyl-L-aspartate + H(+). It functions in the pathway pyrimidine metabolism; UMP biosynthesis via de novo pathway; (S)-dihydroorotate from bicarbonate: step 3/3. In terms of biological role, catalyzes the reversible cyclization of carbamoyl aspartate to dihydroorotate. In Azotobacter vinelandii (strain DJ / ATCC BAA-1303), this protein is Dihydroorotase.